We begin with the raw amino-acid sequence, 72 residues long: BBSome-interacting protein 1 (72 aa).

Belongs to the BBIP10 family.

The protein resides in the cell projection. It is found in the cilium. Its subcellular location is the cytoplasm. Required for primary cilia assembly. The polypeptide is BBSome-interacting protein 1 (bbip1) (Danio rerio (Zebrafish)).